The following is a 107-amino-acid chain: Thioredoxin (107 aa).

One can recognise a Thioredoxin domain in the interval 2-107 (SEVLHINDAD…QLANFINQHI (106 aa)). Cysteine 32 and cysteine 35 are oxidised to a cystine.

It belongs to the thioredoxin family.

In terms of biological role, participates in various redox reactions through the reversible oxidation of its active center dithiol to a disulfide and catalyzes dithiol-disulfide exchange reactions. The polypeptide is Thioredoxin (trxA) (Haemophilus influenzae (strain ATCC 51907 / DSM 11121 / KW20 / Rd)).